Here is an 82-residue protein sequence, read N- to C-terminus: DNA-directed RNA polymerase subunit omega (82 aa).

The protein belongs to the RNA polymerase subunit omega family. As to quaternary structure, in cyanobacteria the RNAP catalytic core is composed of 2 alpha, 1 beta, 1 beta', 1 gamma and 1 omega subunit. When a sigma factor is associated with the core the holoenzyme is formed, which can initiate transcription.

The enzyme catalyses RNA(n) + a ribonucleoside 5'-triphosphate = RNA(n+1) + diphosphate. Functionally, promotes RNA polymerase assembly. Latches the N- and C-terminal regions of the beta' subunit thereby facilitating its interaction with the beta and alpha subunits. This is DNA-directed RNA polymerase subunit omega from Synechococcus sp. (strain CC9902).